A 116-amino-acid chain; its full sequence is Large ribosomal subunit protein uL23 (116 aa).

This sequence belongs to the universal ribosomal protein uL23 family. In terms of assembly, part of the 50S ribosomal subunit. Contacts protein L29, and trigger factor when it is bound to the ribosome.

Functionally, one of the early assembly proteins it binds 23S rRNA. One of the proteins that surrounds the polypeptide exit tunnel on the outside of the ribosome. Forms the main docking site for trigger factor binding to the ribosome. This Psychrobacter sp. (strain PRwf-1) protein is Large ribosomal subunit protein uL23.